A 1790-amino-acid chain; its full sequence is Non-reducing polyketide synthase gsfA (1790 aa).

The N-terminal acylcarrier protein transacylase domain (SAT) stretch occupies residues 20-263; the sequence is GDQRTLFRKL…AMRKIQGMWH (244 aa). Residues 392-822 enclose the Ketosynthase family 3 (KS3) domain; sequence SSKIAVVGMS…GGNTAMIIEE (431 aa). Active-site for beta-ketoacyl synthase activity residues include cysteine 563, histidine 698, and histidine 741. The segment at 922–1223 is malonyl-CoA:ACP transacylase (MAT) domain; that stretch reads FAFAGQGTFY…CSTLHRDSDN (302 aa). Positions 1298–1615 are product template (PT) domain; sequence TSSIHRLYSE…PRIMLNRFFQ (318 aa). Positions 1302-1435 are N-terminal hotdog fold; the sequence is HRLYSENYDS…AYYEDPSTWL (134 aa). The 310-residue stretch at 1302–1611 folds into the PKS/mFAS DH domain; it reads HRLYSENYDS…FRQWPRIMLN (310 aa). The active-site Proton acceptor; for dehydratase activity is histidine 1334. The segment at 1460–1611 is C-terminal hotdog fold; it reads MANKLTTSLA…FRQWPRIMLN (152 aa). Aspartate 1518 acts as the Proton donor; for dehydratase activity in catalysis. Disordered stretches follow at residues 1621–1648 and 1686–1718; these read PPAP…EKTT and LDYS…ADGA. Over residues 1699-1708 the composition is skewed to basic and acidic residues; it reads SDERIEKTDS. Residues 1716-1790 enclose the Carrier domain; it reads DGANDVTSRA…TIGDLKKLLS (75 aa). O-(pantetheine 4'-phosphoryl)serine is present on serine 1753.

It catalyses the reaction 6 malonyl-CoA + acetyl-CoA + 4 H(+) = 2-(2,4-dihydroxy-6-oxidobenzoyl)-5-hydroxy-3-methylbenzenolate + 6 CO2 + 7 CoA + H2O. It participates in secondary metabolite biosynthesis; terpenoid biosynthesis. Functionally, norlichexanthone synthase; part of the gene cluster that mediates the biosynthesis of griseofulvin, an important antifungal drug that has been in use for a long time for treating dermatophyte infections. The first step of the pathway is the formation of the heptaketide backbone by gsfA which is initiated by priming with acetyl-CoA, followed by sequential condensations of 6 malonyl-CoA units. The resulting benzophenone can undergo a spontaneous dehydration to form norlichexanthone. However, the true precursor for the griseofulvin biosynthesis is not norlichexanthone, but the heptaketide benzophenone that is O-methylated at 3-OH by gsfB to produce griseophenone D which is further methylated at 9-OH by gsfC to yield griseophenone C. Griseophenone C is then substrate of halogenase gsfI which is responsible for the regio-specific chlorination at the C13 position to form griseophenone B. The cytochrome P450 gsfF catalyzes the coupling of orcinol and phloroglucinol rings in griseophenone B to form desmethyl-dehydrogriseofulvin A which is further methylated at 5-OH by gsfD to yield dehydrogriseofulvin. Finally, gsfE performs stereospecific reduction of enone 18 of dehydrogriseofulvin to afford the final product griseofulvin. This chain is Non-reducing polyketide synthase gsfA, found in Penicillium aethiopicum.